Reading from the N-terminus, the 182-residue chain is Pentatricopeptide repeat-containing protein At2g01360 (182 aa).

3 PPR repeats span residues E30–L64, G65–D95, and G98–P132.

This sequence belongs to the PPR family. P subfamily.

This chain is Pentatricopeptide repeat-containing protein At2g01360, found in Arabidopsis thaliana (Mouse-ear cress).